We begin with the raw amino-acid sequence, 452 residues long: Phosphatidylinositol N-acetylglucosaminyltransferase GPI3 subunit (452 aa).

The chain crosses the membrane as a helical span at residues Leu-407 to Pro-427.

The protein belongs to the glycosyltransferase group 1 family. In terms of assembly, component of the phosphatidylinositol N-acetylglucosaminyltransferase complex composed of at least GPI1, GPI2, GPI3, GPI15, GPI19 and ERI1.

It is found in the endoplasmic reticulum membrane. It catalyses the reaction a 1,2-diacyl-sn-glycero-3-phospho-(1D-myo-inositol) + UDP-N-acetyl-alpha-D-glucosamine = a 6-(N-acetyl-alpha-D-glucosaminyl)-1-(1,2-diacyl-sn-glycero-3-phospho)-1D-myo-inositol + UDP + H(+). Its pathway is glycolipid biosynthesis; glycosylphosphatidylinositol-anchor biosynthesis. Its activity is regulated as follows. Inhibited by Ras, probably via the interaction between RAS2 and ERI1. Its function is as follows. Catalytic subunit in the complex catalyzing the transfer of N-acetylglucosamine from UDP-N-acetylglucosamine to phosphatidylinositol, the first step of GPI biosynthesis. This Saccharomyces cerevisiae (strain YJM789) (Baker's yeast) protein is Phosphatidylinositol N-acetylglucosaminyltransferase GPI3 subunit (SPT14).